A 273-amino-acid chain; its full sequence is Shikimate dehydrogenase (NADP(+)) (273 aa).

Shikimate-binding positions include Ser-14–Ser-16 and Thr-61. Lys-65 (proton acceptor) is an active-site residue. Shikimate-binding residues include Asn-86 and Asp-102. Residues Gly-126–Ala-130, Asn-150–Lys-155, and Met-213 each bind NADP(+). Tyr-215 contacts shikimate. Gly-237 provides a ligand contact to NADP(+).

The protein belongs to the shikimate dehydrogenase family. Homodimer.

It catalyses the reaction shikimate + NADP(+) = 3-dehydroshikimate + NADPH + H(+). The protein operates within metabolic intermediate biosynthesis; chorismate biosynthesis; chorismate from D-erythrose 4-phosphate and phosphoenolpyruvate: step 4/7. Its function is as follows. Involved in the biosynthesis of the chorismate, which leads to the biosynthesis of aromatic amino acids. Catalyzes the reversible NADPH linked reduction of 3-dehydroshikimate (DHSA) to yield shikimate (SA). This is Shikimate dehydrogenase (NADP(+)) from Aeromonas salmonicida (strain A449).